The chain runs to 284 residues: Bifunctional protein FolD (284 aa).

NADP(+) is bound by residues 164 to 166 (GRS) and S189.

The protein belongs to the tetrahydrofolate dehydrogenase/cyclohydrolase family. In terms of assembly, homodimer.

It carries out the reaction (6R)-5,10-methylene-5,6,7,8-tetrahydrofolate + NADP(+) = (6R)-5,10-methenyltetrahydrofolate + NADPH. The catalysed reaction is (6R)-5,10-methenyltetrahydrofolate + H2O = (6R)-10-formyltetrahydrofolate + H(+). Its pathway is one-carbon metabolism; tetrahydrofolate interconversion. Catalyzes the oxidation of 5,10-methylenetetrahydrofolate to 5,10-methenyltetrahydrofolate and then the hydrolysis of 5,10-methenyltetrahydrofolate to 10-formyltetrahydrofolate. The chain is Bifunctional protein FolD from Listeria innocua serovar 6a (strain ATCC BAA-680 / CLIP 11262).